We begin with the raw amino-acid sequence, 181 residues long: Probable cobalt-precorrin-6B C(15)-methyltransferase (decarboxylating) (181 aa).

S-adenosyl-L-methionine is bound by residues Thr16, 40–44 (GCGSG), Asp61, and Ala89.

It belongs to the methyltransferase superfamily. Archaeal-type CbiT family.

The enzyme catalyses Co-precorrin-6B + S-adenosyl-L-methionine = Co-precorrin-7 + S-adenosyl-L-homocysteine + CO2. The protein operates within cofactor biosynthesis; adenosylcobalamin biosynthesis; cob(II)yrinate a,c-diamide from sirohydrochlorin (anaerobic route): step 8/10. Functionally, catalyzes the methylation of C-15 in cobalt-precorrin-6B followed by the decarboxylation of C-12 to form cobalt-precorrin-7. The polypeptide is Probable cobalt-precorrin-6B C(15)-methyltransferase (decarboxylating) (Methanococcus maripaludis (strain DSM 14266 / JCM 13030 / NBRC 101832 / S2 / LL)).